The sequence spans 894 residues: DNA mismatch repair protein MutS (894 aa).

632–639 is a binding site for ATP; it reads GPNMGGKS.

Belongs to the DNA mismatch repair MutS family.

This protein is involved in the repair of mismatches in DNA. It is possible that it carries out the mismatch recognition step. This protein has a weak ATPase activity. In Paraburkholderia xenovorans (strain LB400), this protein is DNA mismatch repair protein MutS.